A 149-amino-acid chain; its full sequence is D-aminoacyl-tRNA deacylase (149 aa).

The Gly-cisPro motif, important for rejection of L-amino acids motif lies at 137–138 (GP).

It belongs to the DTD family. In terms of assembly, homodimer.

The protein resides in the cytoplasm. It carries out the reaction glycyl-tRNA(Ala) + H2O = tRNA(Ala) + glycine + H(+). It catalyses the reaction a D-aminoacyl-tRNA + H2O = a tRNA + a D-alpha-amino acid + H(+). Its function is as follows. An aminoacyl-tRNA editing enzyme that deacylates mischarged D-aminoacyl-tRNAs. Also deacylates mischarged glycyl-tRNA(Ala), protecting cells against glycine mischarging by AlaRS. Acts via tRNA-based rather than protein-based catalysis; rejects L-amino acids rather than detecting D-amino acids in the active site. By recycling D-aminoacyl-tRNA to D-amino acids and free tRNA molecules, this enzyme counteracts the toxicity associated with the formation of D-aminoacyl-tRNA entities in vivo and helps enforce protein L-homochirality. The chain is D-aminoacyl-tRNA deacylase from Clostridium botulinum (strain 657 / Type Ba4).